The following is a 172-amino-acid chain: Major exported protein (172 aa).

Belongs to the hcp1 family.

The protein localises to the secreted. The sequence is that of Major exported protein (hcpA) from Pseudomonas aeruginosa (strain ATCC 15692 / DSM 22644 / CIP 104116 / JCM 14847 / LMG 12228 / 1C / PRS 101 / PAO1).